A 505-amino-acid chain; its full sequence is Outer capsid protein VP5 (505 aa).

Residues 1–42 (MGKFTSFLKRAGSATKKALTSDAAKRMYKMAGKTLQKVVESE) form an involved in membrane permeabilization region.

It belongs to the orbivirus VP5 family.

The protein resides in the virion. Its function is as follows. VP5 protein is one of the two proteins (with VP2) which constitute the virus particle outer capsid. Acts as a membrane permeabilization protein that mediates release of viral particles from endosomal compartments into the cytoplasm. Permeabilization activity is probably negatively regulated by VP2 and is triggered by endosomal degradation of VP2 and exposure to low pH. The polypeptide is Outer capsid protein VP5 (Segment-6) (African horse sickness virus 9 (AHSV-9)).